We begin with the raw amino-acid sequence, 188 residues long: dCTP deaminase (188 aa).

DCTP is bound by residues 111–116 (KSTYAR), 135–137 (TLE), Q156, Y170, and Q180. Catalysis depends on E137, which acts as the Proton donor/acceptor.

It belongs to the dCTP deaminase family. Homotrimer.

The enzyme catalyses dCTP + H2O + H(+) = dUTP + NH4(+). The protein operates within pyrimidine metabolism; dUMP biosynthesis; dUMP from dCTP (dUTP route): step 1/2. Catalyzes the deamination of dCTP to dUTP. The chain is dCTP deaminase from Pseudomonas fluorescens (strain SBW25).